We begin with the raw amino-acid sequence, 416 residues long: Formyl-CoA:oxalate CoA-transferase (416 aa).

CoA contacts are provided by residues Gln-17–Ser-18, Arg-38, Leu-72–Lys-75, Asn-96–His-98, His-104, and Lys-137–Glu-140. The Nucleophile role is filled by Asp-169. A substrate-binding site is contributed by Gly-248–Gln-250. Gln-273–Gln-275 is a binding site for CoA.

It belongs to the CoA-transferase III family. Frc subfamily. In terms of assembly, homodimer.

It carries out the reaction formyl-CoA + oxalate = oxalyl-CoA + formate. Its pathway is metabolic intermediate degradation; oxalate degradation; CO(2) and formate from oxalate: step 1/2. Its function is as follows. Involved in the catabolism of oxalate and in the adapatation to low pH via the induction of the oxalate-dependent acid tolerance response (ATR). Catalyzes the transfer of the CoA moiety from formyl-CoA to oxalate. The chain is Formyl-CoA:oxalate CoA-transferase from Escherichia coli O17:K52:H18 (strain UMN026 / ExPEC).